The following is a 469-amino-acid chain: Lactonohydrolase oryH (469 aa).

The first 20 residues, Met1–Ala20, serve as a signal peptide directing secretion.

The protein belongs to the SMP-30/CGR1 family.

It participates in secondary metabolite biosynthesis. Lactonohydrolase; part of the gene cluster that mediates the biosynthesis of oryzines, natural products with an unusual maleidride backbone. The two subunits of the fungal fatty acid synthase oryfasA and oryfasB probably form octenoic acid. This fatty acid is most likely activated by the acyl-CoA ligase oryP to give octenyl-CoA before the citrate synthase-like protein oryE catalyzes condensation with oxaloacetate to form tricarboxylic acid. The next steps of the pathways are conjectural, but a favorite possible route has been proposed, beginning with decarboxylation and concomitant dehydration by the decarboxylase oryM, followed by tautomerization, which may lead to the production of a diene intermediate. Reduction of this diene intermediate could give the known metabolite piliformic acid. On the pathway to oryzine B and oryzine A, however, hydroxylation of the diene by the alpha-ketoglutarate-dependent dioxygenase oryG and lactonisation by the lactonohydrolases oryH or oryL could give oryzine B directly. Finally, enoyl reduction by the dehydrogenase oryD would then convert oryzine B into oryzine A. The polypeptide is Lactonohydrolase oryH (Aspergillus oryzae (strain ATCC 42149 / RIB 40) (Yellow koji mold)).